Reading from the N-terminus, the 167-residue chain is Lipoprotein signal peptidase (167 aa).

3 helical membrane passes run 10–30 (LIWL…KAWV), 68–88 (WQMW…TFWL), and 98–118 (SALP…DRFL). Residues aspartate 124 and aspartate 142 contribute to the active site. Residues 138 to 158 (FNLADSAIVAGAIGIGLLSLF) traverse the membrane as a helical segment.

It belongs to the peptidase A8 family.

It is found in the cell inner membrane. The enzyme catalyses Release of signal peptides from bacterial membrane prolipoproteins. Hydrolyzes -Xaa-Yaa-Zaa-|-(S,diacylglyceryl)Cys-, in which Xaa is hydrophobic (preferably Leu), and Yaa (Ala or Ser) and Zaa (Gly or Ala) have small, neutral side chains.. Its pathway is protein modification; lipoprotein biosynthesis (signal peptide cleavage). Its function is as follows. This protein specifically catalyzes the removal of signal peptides from prolipoproteins. The sequence is that of Lipoprotein signal peptidase from Xylella fastidiosa (strain 9a5c).